Consider the following 61-residue polypeptide: Putative MSV199 domain-containing protein 200R (61 aa).

The sequence is that of Putative MSV199 domain-containing protein 200R from Invertebrate iridescent virus 6 (IIV-6).